A 157-amino-acid polypeptide reads, in one-letter code: Probable chemoreceptor glutamine deamidase CheD (157 aa).

This sequence belongs to the CheD family.

The enzyme catalyses L-glutaminyl-[protein] + H2O = L-glutamyl-[protein] + NH4(+). In terms of biological role, probably deamidates glutamine residues to glutamate on methyl-accepting chemotaxis receptors (MCPs), playing an important role in chemotaxis. This Archaeoglobus fulgidus (strain ATCC 49558 / DSM 4304 / JCM 9628 / NBRC 100126 / VC-16) protein is Probable chemoreceptor glutamine deamidase CheD.